The following is a 672-amino-acid chain: Bifunctional polymyxin resistance protein ArnA (672 aa).

The interval 1-310 is formyltransferase ArnAFT; that stretch reads MKAIVFAYHD…EMGMVPQAKL (310 aa). The active-site Proton donor; for formyltransferase activity is H104. (6R)-10-formyltetrahydrofolate-binding positions include R114 and 136-140; that span reads VSRAD. The segment at 320-672 is dehydrogenase ArnADH; sequence RRTRVLILGV…HADNVTDTQG (353 aa). NAD(+) is bound by residues D353 and 374–375; that span reads DI. UDP-alpha-D-glucuronate is bound by residues A399, Y404, and 438 to 439; that span reads TS. E440 acts as the Proton acceptor; for decarboxylase activity in catalysis. UDP-alpha-D-glucuronate is bound by residues R466, N498, 532 to 541, and Y619; that span reads KLVDGGAQKR. The active-site Proton donor; for decarboxylase activity is the R625.

In the N-terminal section; belongs to the Fmt family. UDP-L-Ara4N formyltransferase subfamily. It in the C-terminal section; belongs to the NAD(P)-dependent epimerase/dehydratase family. UDP-glucuronic acid decarboxylase subfamily. In terms of assembly, homohexamer, formed by a dimer of trimers.

The enzyme catalyses UDP-alpha-D-glucuronate + NAD(+) = UDP-beta-L-threo-pentopyranos-4-ulose + CO2 + NADH. The catalysed reaction is UDP-4-amino-4-deoxy-beta-L-arabinose + (6R)-10-formyltetrahydrofolate = UDP-4-deoxy-4-formamido-beta-L-arabinose + (6S)-5,6,7,8-tetrahydrofolate + H(+). It functions in the pathway nucleotide-sugar biosynthesis; UDP-4-deoxy-4-formamido-beta-L-arabinose biosynthesis; UDP-4-deoxy-4-formamido-beta-L-arabinose from UDP-alpha-D-glucuronate: step 1/3. The protein operates within nucleotide-sugar biosynthesis; UDP-4-deoxy-4-formamido-beta-L-arabinose biosynthesis; UDP-4-deoxy-4-formamido-beta-L-arabinose from UDP-alpha-D-glucuronate: step 3/3. It participates in bacterial outer membrane biogenesis; lipopolysaccharide biosynthesis. Its function is as follows. Bifunctional enzyme that catalyzes the oxidative decarboxylation of UDP-glucuronic acid (UDP-GlcUA) to UDP-4-keto-arabinose (UDP-Ara4O) and the addition of a formyl group to UDP-4-amino-4-deoxy-L-arabinose (UDP-L-Ara4N) to form UDP-L-4-formamido-arabinose (UDP-L-Ara4FN). The modified arabinose is attached to lipid A and is required for resistance to polymyxin and cationic antimicrobial peptides. This Pectobacterium carotovorum subsp. carotovorum (strain PC1) protein is Bifunctional polymyxin resistance protein ArnA.